Consider the following 223-residue polypeptide: ATP-dependent dethiobiotin synthetase BioD (223 aa).

T16 is a Mg(2+) binding site. Residue K37 is part of the active site. S41 serves as a coordination point for substrate. Residues D50 and E111 each contribute to the Mg(2+) site. Residues D50, 111–114 (EGAG), and 171–172 (NR) each bind ATP.

It belongs to the dethiobiotin synthetase family. As to quaternary structure, homodimer. Mg(2+) is required as a cofactor.

The protein resides in the cytoplasm. It catalyses the reaction (7R,8S)-7,8-diammoniononanoate + CO2 + ATP = (4R,5S)-dethiobiotin + ADP + phosphate + 3 H(+). The protein operates within cofactor biosynthesis; biotin biosynthesis; biotin from 7,8-diaminononanoate: step 1/2. In terms of biological role, catalyzes a mechanistically unusual reaction, the ATP-dependent insertion of CO2 between the N7 and N8 nitrogen atoms of 7,8-diaminopelargonic acid (DAPA, also called 7,8-diammoniononanoate) to form a ureido ring. In Anaeromyxobacter dehalogenans (strain 2CP-1 / ATCC BAA-258), this protein is ATP-dependent dethiobiotin synthetase BioD.